Here is a 699-residue protein sequence, read N- to C-terminus: Elongation factor G (699 aa).

The tr-type G domain maps to 8–288; sequence EDYRNFGIMA…AVVDYLPSPV (281 aa). Residues 17 to 24, 86 to 90, and 140 to 143 contribute to the GTP site; these read AHIDAGKT, DTPGH, and NKMD.

This sequence belongs to the TRAFAC class translation factor GTPase superfamily. Classic translation factor GTPase family. EF-G/EF-2 subfamily.

The protein resides in the cytoplasm. Its function is as follows. Catalyzes the GTP-dependent ribosomal translocation step during translation elongation. During this step, the ribosome changes from the pre-translocational (PRE) to the post-translocational (POST) state as the newly formed A-site-bound peptidyl-tRNA and P-site-bound deacylated tRNA move to the P and E sites, respectively. Catalyzes the coordinated movement of the two tRNA molecules, the mRNA and conformational changes in the ribosome. This chain is Elongation factor G, found in Sinorhizobium medicae (strain WSM419) (Ensifer medicae).